We begin with the raw amino-acid sequence, 345 residues long: tRNA dimethylallyltransferase (345 aa).

An ATP-binding site is contributed by 9–16 (GPTASGKS). 11–16 (TASGKS) is a substrate binding site. Interaction with substrate tRNA stretches follow at residues 34–37 (DSMQ) and 195–199 (QRMIR).

The protein belongs to the IPP transferase family. In terms of assembly, monomer. Requires Mg(2+) as cofactor.

It carries out the reaction adenosine(37) in tRNA + dimethylallyl diphosphate = N(6)-dimethylallyladenosine(37) in tRNA + diphosphate. Catalyzes the transfer of a dimethylallyl group onto the adenine at position 37 in tRNAs that read codons beginning with uridine, leading to the formation of N6-(dimethylallyl)adenosine (i(6)A). This chain is tRNA dimethylallyltransferase, found in Orientia tsutsugamushi (strain Ikeda) (Rickettsia tsutsugamushi).